A 184-amino-acid chain; its full sequence is dCTP deaminase (184 aa).

DCTP contacts are provided by residues 107 to 112 (KSTYAR), 131 to 133 (TLE), glutamine 152, tyrosine 166, and glutamine 176. Catalysis depends on glutamate 133, which acts as the Proton donor/acceptor.

The protein belongs to the dCTP deaminase family. In terms of assembly, homotrimer.

It carries out the reaction dCTP + H2O + H(+) = dUTP + NH4(+). It functions in the pathway pyrimidine metabolism; dUMP biosynthesis; dUMP from dCTP (dUTP route): step 1/2. Catalyzes the deamination of dCTP to dUTP. This Rhizorhabdus wittichii (strain DSM 6014 / CCUG 31198 / JCM 15750 / NBRC 105917 / EY 4224 / RW1) (Sphingomonas wittichii) protein is dCTP deaminase.